The chain runs to 549 residues: Glucose-6-phosphate isomerase (549 aa).

The Proton donor role is filled by Glu-355. Catalysis depends on residues His-386 and Lys-514.

This sequence belongs to the GPI family.

The protein localises to the cytoplasm. It catalyses the reaction alpha-D-glucose 6-phosphate = beta-D-fructose 6-phosphate. The protein operates within carbohydrate biosynthesis; gluconeogenesis. It participates in carbohydrate degradation; glycolysis; D-glyceraldehyde 3-phosphate and glycerone phosphate from D-glucose: step 2/4. Functionally, catalyzes the reversible isomerization of glucose-6-phosphate to fructose-6-phosphate. This chain is Glucose-6-phosphate isomerase, found in Aeromonas salmonicida (strain A449).